The sequence spans 147 residues: Hemoglobin subunit beta (147 aa).

An N-acetylvaline modification is found at Val2. The 145-residue stretch at 3–147 (HLTGEEKAAV…VANALAHKYH (145 aa)) folds into the Globin domain. Residue Thr13 is modified to Phosphothreonine. Position 45 is a phosphoserine (Ser45). N6-acetyllysine is present on Lys60. Residue His64 participates in heme b binding. N6-acetyllysine is present on Lys83. His93 is a binding site for heme b. The residue at position 94 (Cys94) is an S-nitrosocysteine. An N6-acetyllysine modification is found at Lys145.

It belongs to the globin family. In terms of assembly, heterotetramer of two alpha chains and two beta chains. Red blood cells.

Involved in oxygen transport from the lung to the various peripheral tissues. This is Hemoglobin subunit beta (HBB) from Aotus azarae (Azara's night monkey).